Reading from the N-terminus, the 259-residue chain is MELLAKTRKLNALLQSAAGKPVNFREMSDTMCEVIEANVFVVSRRGKLLGYAIHQQIENERMKQMLAERQFPEEYTQSLFNITETSSNLDVNSAYTAFPVENRELFGQGLTTIVPIVGGGERLGTLVLARLGQEFLDDDLILAEYSSTVVGMEILREKAEEIEEEARSKAVVQMAISSLSYSELEAIEHIFEELNGTEGLLVASKIADRVGITRSVIVNALRKLESAGVIESRSLGMKGTYIKVLNDKFLQELAKLKTN.

Residues 1–155 are GAF domain; sequence MELLAKTRKL…SSTVVGMEIL (155 aa). Positions 203–222 form a DNA-binding region, H-T-H motif; that stretch reads ASKIADRVGITRSVIVNALR. The residue at position 215 (S215) is a Phosphoserine.

Belongs to the CodY family.

The protein localises to the cytoplasm. Its function is as follows. DNA-binding global transcriptional regulator which is involved in the adaptive response to starvation and acts by directly or indirectly controlling the expression of numerous genes in response to nutrient availability. During rapid exponential growth, CodY is highly active and represses genes whose products allow adaptation to nutrient depletion. The polypeptide is Global transcriptional regulator CodY (Bacillus cereus (strain B4264)).